Reading from the N-terminus, the 388-residue chain is Xylose isomerase (388 aa).

Residues His54 and Asp57 contribute to the active site. Glu181, Glu217, His220, Asp245, Asp255, Asp257, and Asp287 together coordinate Mg(2+).

The protein belongs to the xylose isomerase family. In terms of assembly, homotetramer. Mg(2+) is required as a cofactor.

Its subcellular location is the cytoplasm. The catalysed reaction is alpha-D-xylose = alpha-D-xylulofuranose. The chain is Xylose isomerase from Streptomyces corchorusii (Streptomyces chibaensis).